Consider the following 60-residue polypeptide: Homeobox protein engrailed-like (60 aa).

Residues Gly1–Gln41 constitute a DNA-binding region (homeobox).

The protein belongs to the engrailed homeobox family.

The protein localises to the nucleus. This is Homeobox protein engrailed-like from Lampetra planeri (Brook lamprey).